Consider the following 255-residue polypeptide: 5'-nucleotidase SurE (255 aa).

Residues Asp-8, Asp-9, Ser-40, and Asn-93 each coordinate a divalent metal cation.

Belongs to the SurE nucleotidase family. Requires a divalent metal cation as cofactor.

The protein localises to the cytoplasm. It catalyses the reaction a ribonucleoside 5'-phosphate + H2O = a ribonucleoside + phosphate. Functionally, nucleotidase that shows phosphatase activity on nucleoside 5'-monophosphates. This Bradyrhizobium sp. (strain ORS 278) protein is 5'-nucleotidase SurE.